Consider the following 815-residue polypeptide: G-type lectin S-receptor-like serine/threonine-protein kinase SD1-1 (815 aa).

The N-terminal stretch at 1–22 (MREIHSLFSLSLFLISSSLSVA) is a signal peptide. Residues 23 to 438 (LDYNVITPKE…FAKIEFKGRE (416 aa)) lie on the Extracellular side of the membrane. The region spanning 25–152 (YNVITPKEFL…EEAVLWQSFD (128 aa)) is the Bulb-type lectin domain. Residues asparagine 93, asparagine 249, and asparagine 265 are each glycosylated (N-linked (GlcNAc...) asparagine). Positions 288–326 (PEDECDYYSICGAYAVCGINSKNTPSCSCLQGFKPKSGR) constitute an EGF-like domain. Disulfide bonds link cysteine 292–cysteine 304 and cysteine 298–cysteine 314. Residues asparagine 329 and asparagine 385 are each glycosylated (N-linked (GlcNAc...) asparagine). In terms of domain architecture, PAN spans 345 to 428 (CEKKDAFVKF…FGQDVYIRMG (84 aa)). 2 disulfide bridges follow: cysteine 378/cysteine 403 and cysteine 382/cysteine 388. The helical transmembrane segment at 439-459 (VVGMVVGSVVAIAVVLVVVFA) threads the bilayer. Over 460–815 (CFRKKIMKRY…EVSITMLQGR (356 aa)) the chain is Cytoplasmic. The Protein kinase domain occupies 500 to 783 (FSYVNFLGRG…SDSSLPHPTQ (284 aa)). ATP contacts are provided by residues 506-514 (LGRGGFGPV) and lysine 528. Residue serine 534 is modified to Phosphoserine. Residues 589-606 (RRSTELDWKKRMNIINGV) are caM-binding. Catalysis depends on aspartate 625, which acts as the Proton acceptor. Position 642 is a phosphoserine (serine 642). At threonine 659 the chain carries Phosphothreonine. Serine 797 and serine 803 each carry phosphoserine. Position 810 is a phosphothreonine (threonine 810).

This sequence belongs to the protein kinase superfamily. Ser/Thr protein kinase family. In terms of assembly, interacts with PUB9, PUB13 and PUB14.

The protein localises to the cell membrane. The catalysed reaction is L-seryl-[protein] + ATP = O-phospho-L-seryl-[protein] + ADP + H(+). It carries out the reaction L-threonyl-[protein] + ATP = O-phospho-L-threonyl-[protein] + ADP + H(+). This is G-type lectin S-receptor-like serine/threonine-protein kinase SD1-1 (SD11) from Arabidopsis thaliana (Mouse-ear cress).